We begin with the raw amino-acid sequence, 166 residues long: Crossover junction endodeoxyribonuclease RuvC (166 aa).

Residues aspartate 7, glutamate 70, and histidine 143 contribute to the active site. Residues aspartate 7, glutamate 70, and histidine 143 each coordinate Mg(2+).

This sequence belongs to the RuvC family. In terms of assembly, homodimer which binds Holliday junction (HJ) DNA. The HJ becomes 2-fold symmetrical on binding to RuvC with unstacked arms; it has a different conformation from HJ DNA in complex with RuvA. In the full resolvosome a probable DNA-RuvA(4)-RuvB(12)-RuvC(2) complex forms which resolves the HJ. Mg(2+) serves as cofactor.

The protein resides in the cytoplasm. The enzyme catalyses Endonucleolytic cleavage at a junction such as a reciprocal single-stranded crossover between two homologous DNA duplexes (Holliday junction).. In terms of biological role, the RuvA-RuvB-RuvC complex processes Holliday junction (HJ) DNA during genetic recombination and DNA repair. Endonuclease that resolves HJ intermediates. Cleaves cruciform DNA by making single-stranded nicks across the HJ at symmetrical positions within the homologous arms, yielding a 5'-phosphate and a 3'-hydroxyl group; requires a central core of homology in the junction. The consensus cleavage sequence is 5'-(A/T)TT(C/G)-3'. Cleavage occurs on the 3'-side of the TT dinucleotide at the point of strand exchange. HJ branch migration catalyzed by RuvA-RuvB allows RuvC to scan DNA until it finds its consensus sequence, where it cleaves and resolves the cruciform DNA. This Thermus thermophilus (strain ATCC BAA-163 / DSM 7039 / HB27) protein is Crossover junction endodeoxyribonuclease RuvC.